Here is a 411-residue protein sequence, read N- to C-terminus: Putative ion-transport protein YfeO (411 aa).

Transmembrane regions (helical) follow at residues 9–29 (MLLL…VLIA), 54–74 (DSPF…GLII), 99–119 (ALPG…SLGP), 149–169 (ILAS…AALI), 186–206 (LFAP…FFHP), 223–243 (IASG…AVWC), 258–278 (VLIL…GGPL), 296–316 (LGAG…VIAA), 322–342 (GGRI…LHAH), 343–363 (VEAV…VLVV), and 386–406 (LLCI…LLAA).

Belongs to the chloride channel (TC 2.A.49) family.

The protein localises to the cell membrane. The sequence is that of Putative ion-transport protein YfeO from Salmonella agona (strain SL483).